The chain runs to 552 residues: Leucine-rich repeat-containing protein 56 (552 aa).

5 LRR repeats span residues 94 to 115 (NLIQ…GTSL), 117 to 138 (HLQV…GSFL), 139 to 160 (ELKE…CLLE), 161 to 182 (QLEV…RYLQ), and 186 to 206 (RLAM…PGPS). 2 disordered regions span residues 348-375 (APLE…AESC) and 401-435 (QQER…PPRL).

The protein belongs to the LRRC56 family. In terms of assembly, interacts with IFT88.

It localises to the cell projection. It is found in the cilium. Functionally, required for the assembly of dynein arms. The chain is Leucine-rich repeat-containing protein 56 (Lrrc56) from Mus musculus (Mouse).